The following is a 790-amino-acid chain: Nitrogen permease reactivator protein (790 aa).

Residues 1–68 (MSSLTRLLQE…DRNRANVPVP (68 aa)) form a disordered region. Polar residues predominate over residues 16–38 (TSNSSPRTSADTLTTTPESQSLD). Positions 46-58 (SSHIGSVSNSSSS) are enriched in low complexity. A Phosphoserine; by autocatalysis modification is found at Ser-47. 8 positions are modified to phosphoserine: Ser-85, Ser-90, Ser-100, Ser-111, Ser-116, Ser-125, Ser-137, and Ser-141. Polar residues predominate over residues 151–175 (RLSTTSHTSGRAIPSLSSSIPYSVP). Disordered regions lie at residues 151–188 (RLSTTSHTSGRAIPSLSSSIPYSVPNSNKDNNSSNSNS) and 234–258 (LQKASMDSNNANATQSRSISRSGSF). Low complexity predominate over residues 176–188 (NSNKDNNSSNSNS). Positions 238 to 248 (SMDSNNANATQ) are enriched in polar residues. Residues 249–258 (SRSISRSGSF) show a composition bias toward low complexity. Ser-257 bears the Phosphoserine; by autocatalysis mark. 7 positions are modified to phosphoserine: Ser-259, Ser-260, Ser-288, Ser-292, Ser-317, Ser-320, and Ser-328. Low complexity predominate over residues 276–289 (NSNSAGMSFSANSN). The interval 276–357 (NSNSAGMSFS…QSVPRSQHSS (82 aa)) is disordered. 3 stretches are compositionally biased toward polar residues: residues 290–305 (GPSPNIKNPNVTNGST), 314–339 (RQSSIYSASRQPTGSYTDNFYGSPSS), and 346–357 (PSQSVPRSQHSS). Tyr-334 is modified (phosphotyrosine). 3 positions are modified to phosphoserine: Ser-336, Ser-353, and Ser-356. Phosphoserine; by autocatalysis is present on Ser-357. The residue at position 385 (Ser-385) is a Phosphoserine. Positions 438–742 (IKTGADLGAG…IEEIMEDPWI (305 aa)) constitute a Protein kinase domain. Residues 444–452 (LGAGAGGSV) and Lys-467 each bind ATP. The active-site Proton acceptor is Asp-561. Disordered regions lie at residues 666 to 704 (LVTRTPDPPSYDESHSTEKKKPESSSNNVSDPNNVNIGP) and 766 to 790 (HHTQVDQSEAHIAGLEKKKKKQNNQ). Positions 677-688 (DESHSTEKKKPE) are enriched in basic and acidic residues. Positions 689-701 (SSSNNVSDPNNVN) are enriched in low complexity.

The protein belongs to the protein kinase superfamily. Ser/Thr protein kinase family. In terms of assembly, interacts with TIP41. In terms of processing, hyperphosphorylated in nitrogen-rich growth medium. Nitrogen limitation (or rapamycin treatment) leads to substantial, though not complete dephosphorylation. Autophosphorylation plays only a minor role and seems not to be regulated by the quality of the nitrogen source.

The protein resides in the cytoplasm. It carries out the reaction L-seryl-[protein] + ATP = O-phospho-L-seryl-[protein] + ADP + H(+). The catalysed reaction is L-threonyl-[protein] + ATP = O-phospho-L-threonyl-[protein] + ADP + H(+). Its activity is regulated as follows. Dephosphorylation by SIT4 activates NPR1 kinase activity. Functionally, nutrient-regulated protein kinase that promotes the activity of at least 6 distinct transport systems for nitrogenous nutrients under conditions of nitrogen catabolite derepression. Under poor nitrogen growth conditions, required for post-Golgi sorting of the general amino acid permease GAP1 and the three known ammonia permeases, MEP1/2/3, to the plasma membrane. Also contributes to the stability and the retention of GAP1 at the plasma membrane. Inversely, promotes the degradation of tryptophan permease TAT2 under the same conditions. Activity is regulated by the TOR signaling pathway via phosphatase SIT4. Although thought to be involved in regulation of GLN3-dependent transcription by nitrogen catabolite repression, this seems to be an indirect effect from the reduced uptake of the nitrogen-repressing compound. The protein is Nitrogen permease reactivator protein (NPR1) of Saccharomyces cerevisiae (strain ATCC 204508 / S288c) (Baker's yeast).